Consider the following 355-residue polypeptide: Histidinol-phosphate aminotransferase (355 aa).

K218 bears the N6-(pyridoxal phosphate)lysine mark.

It belongs to the class-II pyridoxal-phosphate-dependent aminotransferase family. Histidinol-phosphate aminotransferase subfamily. As to quaternary structure, homodimer. The cofactor is pyridoxal 5'-phosphate.

The catalysed reaction is L-histidinol phosphate + 2-oxoglutarate = 3-(imidazol-4-yl)-2-oxopropyl phosphate + L-glutamate. It functions in the pathway amino-acid biosynthesis; L-histidine biosynthesis; L-histidine from 5-phospho-alpha-D-ribose 1-diphosphate: step 7/9. In Pelodictyon phaeoclathratiforme (strain DSM 5477 / BU-1), this protein is Histidinol-phosphate aminotransferase.